A 379-amino-acid chain; its full sequence is Lipoyl synthase, mitochondrial (379 aa).

Residues Cys94, Cys99, Cys105, Cys126, Cys130, Cys133, and Ser342 each contribute to the [4Fe-4S] cluster site. Residues Gly109–Leu331 form the Radical SAM core domain.

It belongs to the radical SAM superfamily. Lipoyl synthase family. The cofactor is [4Fe-4S] cluster.

The protein localises to the mitochondrion. The catalysed reaction is [[Fe-S] cluster scaffold protein carrying a second [4Fe-4S](2+) cluster] + N(6)-octanoyl-L-lysyl-[protein] + 2 oxidized [2Fe-2S]-[ferredoxin] + 2 S-adenosyl-L-methionine + 4 H(+) = [[Fe-S] cluster scaffold protein] + N(6)-[(R)-dihydrolipoyl]-L-lysyl-[protein] + 4 Fe(3+) + 2 hydrogen sulfide + 2 5'-deoxyadenosine + 2 L-methionine + 2 reduced [2Fe-2S]-[ferredoxin]. Its pathway is protein modification; protein lipoylation via endogenous pathway; protein N(6)-(lipoyl)lysine from octanoyl-[acyl-carrier-protein]: step 2/2. Its function is as follows. Catalyzes the radical-mediated insertion of two sulfur atoms into the C-6 and C-8 positions of the octanoyl moiety bound to the lipoyl domains of lipoate-dependent enzymes, thereby converting the octanoylated domains into lipoylated derivatives. In Leishmania braziliensis, this protein is Lipoyl synthase, mitochondrial.